The sequence spans 487 residues: Glutamyl-tRNA(Gln) amidotransferase subunit A (487 aa).

Catalysis depends on charge relay system residues Lys-79 and Ser-154. Residue Ser-178 is the Acyl-ester intermediate of the active site.

This sequence belongs to the amidase family. GatA subfamily. As to quaternary structure, heterotrimer of A, B and C subunits.

It carries out the reaction L-glutamyl-tRNA(Gln) + L-glutamine + ATP + H2O = L-glutaminyl-tRNA(Gln) + L-glutamate + ADP + phosphate + H(+). In terms of biological role, allows the formation of correctly charged Gln-tRNA(Gln) through the transamidation of misacylated Glu-tRNA(Gln) in organisms which lack glutaminyl-tRNA synthetase. The reaction takes place in the presence of glutamine and ATP through an activated gamma-phospho-Glu-tRNA(Gln). The polypeptide is Glutamyl-tRNA(Gln) amidotransferase subunit A (Heliobacterium modesticaldum (strain ATCC 51547 / Ice1)).